The chain runs to 436 residues: UDP-N-acetylmuramate--L-alanine ligase (436 aa).

ATP is bound at residue 108-114 (GAHGKTS).

It belongs to the MurCDEF family.

The protein resides in the cytoplasm. It catalyses the reaction UDP-N-acetyl-alpha-D-muramate + L-alanine + ATP = UDP-N-acetyl-alpha-D-muramoyl-L-alanine + ADP + phosphate + H(+). It functions in the pathway cell wall biogenesis; peptidoglycan biosynthesis. Its function is as follows. Cell wall formation. The sequence is that of UDP-N-acetylmuramate--L-alanine ligase from Bacillus cereus (strain B4264).